The following is a 456-amino-acid chain: MHRYKEEASSLIKLATPVLIASVAQTGMGFVDTVMAGGVSATDMAAVSVASSIWLPSILFGIGLLMALVPVVAQLNGSARREKIPFEIQQGVVLALLISIPIIGVLLQTQFILQLMDVEAVMAGKTVGYIHAVIFAVPAFLLFQTLRSFTDGMSLTKPAMVIGFIGLLLNIPLNWIFVYGKFGAPELGGVGCGVATTIVYWVMFALLLAYVMTSSRLKSINVFGEYHKPQWKAQVRLFKLGFPVAAALFFEVTLFAVVALLVSPLGPIIVAAHQVAINFSSLVFMLPMSVGAAVSIRVGHRLGEENVDGARVASRVGIMVGLALATITAIITVLSRELIAELYTNNPEVISLAMQLLLFAAVYQCTDAVQVIAAGALRGYKDMRAIFNRTFIAYWILGLPTGYILGRTDWIVEPMGAQGFWLGFIIGLTAAALMLGVRLRWMHRQEPDVQLNFSLQ.

Transmembrane regions (helical) follow at residues 11 to 31, 53 to 73, 92 to 112, 126 to 146, 159 to 179, 189 to 209, 242 to 262, 268 to 288, 314 to 334, 356 to 376, 385 to 405, and 417 to 437; these read LIKL…MGFV, IWLP…PVVA, VVLA…TQFI, TVGY…FQTL, AMVI…IFVY, GVGC…LLLA, FPVA…ALLV, IIVA…MLPM, SRVG…ITVL, LLLF…AAGA, AIFN…GYIL, and AQGF…MLGV.

This sequence belongs to the multi antimicrobial extrusion (MATE) (TC 2.A.66.1) family.

Its subcellular location is the cell inner membrane. Multidrug efflux pump that functions as a Na(+)/drug antiporter. Confers resistance to several drugs, such as norfloxacin, ciprofloxacin, ethidium, kanamycin and streptomycin. This is Multidrug resistance protein NorM (norM) from Vibrio parahaemolyticus serotype O3:K6 (strain RIMD 2210633).